The primary structure comprises 500 residues: Probable malate:quinone oxidoreductase (500 aa).

Belongs to the MQO family. FAD is required as a cofactor.

The catalysed reaction is (S)-malate + a quinone = a quinol + oxaloacetate. It functions in the pathway carbohydrate metabolism; tricarboxylic acid cycle; oxaloacetate from (S)-malate (quinone route): step 1/1. The polypeptide is Probable malate:quinone oxidoreductase (Bacillus cereus (strain G9842)).